We begin with the raw amino-acid sequence, 990 residues long: TonB-dependent receptor P26 (990 aa).

A TonB box motif is present at residues 86–93; that stretch reads DEVVVIGY. Residues 97 to 213 enclose the TBDR plug domain; the sequence is RKSDLTGSVS…ANGVVLVTTK (117 aa). The region spanning 220-990 is the TBDR beta-barrel domain; it reads SSKPEVSANI…TITLGLNVTF (771 aa). The segment at 878 to 902 is disordered; it reads TPENPTSDIPRAGGDSVTGTPPNSA. Residues 974-990 carry the TonB C-terminal box motif; the sequence is GSYPNPRTITLGLNVTF.

It belongs to the TonB-dependent receptor family.

It localises to the cell outer membrane. TonB-dependent receptor probably involved in ulvan degradation. Ulvan is the main polysaccharide component of the Ulvales (green seaweed) cell wall. It is composed of disaccharide building blocks comprising 3-sulfated rhamnose (Rha3S) linked to D-glucuronic acid (GlcA), L-iduronic acid (IduA), or D-xylose (Xyl). The TonB-dependent receptor may mediate transport of ulvan oligosaccharides from the surface of the outer membrane to the periplasm for subsequent degradation. In Formosa agariphila (strain DSM 15362 / KCTC 12365 / LMG 23005 / KMM 3901 / M-2Alg 35-1), this protein is TonB-dependent receptor P26.